Here is a 233-residue protein sequence, read N- to C-terminus: TATA-box-binding protein 1 (233 aa).

A run of 2 repeats spans residues 58 to 134 (LQNI…ARIV) and 148 to 225 (IQNI…YPVL).

The protein belongs to the TBP family. Belongs to the TFIID complex together with the TBP-associated factors (TAFs). Binds DNA as monomer.

The protein localises to the nucleus. Functionally, general transcription factor that functions at the core of the DNA-binding multiprotein factor TFIID. Binding of TFIID to the TATA box is the initial transcriptional step of the pre-initiation complex (PIC), playing a role in the activation of eukaryotic genes transcribed by RNA polymerase II. The chain is TATA-box-binding protein 1 (TBP1) from Triticum aestivum (Wheat).